Reading from the N-terminus, the 131-residue chain is MNPSSTKVSWATVTLLLLLLLLPPALLSPGAAAQPLPDCCRQKTCSCRLYELLHGAGNHAAGILTLGKRRPGPPGLQGRLQRLLQASGNHAAGILTMGRRAGAEPALRPCSGRRCPSEAASSVAPGGRSGV.

A Pyrrolidone carboxylic acid modification is found at Q34. Cystine bridges form between C39/C45 and C40/C47. A Leucine amide modification is found at L66. Residues 104-131 (EPALRPCSGRRCPSEAASSVAPGGRSGV) form a disordered region.

It belongs to the orexin family.

It is found in the rough endoplasmic reticulum. It localises to the cytoplasmic vesicle. Its subcellular location is the synapse. Functionally, neuropeptides that play a significant role in the regulation of food intake and sleep-wakefulness, possibly by coordinating the complex behavioral and physiologic responses of these complementary homeostatic functions. A broader role in the homeostatic regulation of energy metabolism, autonomic function, hormonal balance and the regulation of body fluids, is also suggested. Binds to orexin receptors HCRTR1/OX1R and HCRTR2/OX2R with a high affinity. Stimulates food intake. Modulates pituitary luteinizing hormone secretion in an ovarian steroid-dependent manner. In terms of biological role, binds to orexin receptor HCRTR2/OX2R only. Stimulates food intake. Modulates pituitary luteinizing hormone secretion in an ovarian steroid-dependent manner. The sequence is that of Hypocretin neuropeptide precursor (HCRT) from Bos taurus (Bovine).